Reading from the N-terminus, the 320-residue chain is Transcription termination/antitermination protein NusG (320 aa).

Belongs to the NusG family.

Its function is as follows. Participates in transcription elongation, termination and antitermination. This chain is Transcription termination/antitermination protein NusG, found in Mycoplasma pneumoniae (strain ATCC 29342 / M129 / Subtype 1) (Mycoplasmoides pneumoniae).